The primary structure comprises 614 residues: Ankyrin repeat domain-containing protein 55 (614 aa).

Residues 1–20 (MMRQATMDFSTPSVFDQQRG) form a disordered region. Residues 7 to 16 (MDFSTPSVFD) show a composition bias toward polar residues. 9 ANK repeats span residues 26–55 (VDLTMVYQAASNGDVNALTAVIREDPSILE), 60–89 (EGCTPLMHAVSGRQADTVKLLLKMGANINM), 93–125 (YGRTSLCLATYLGWLEGCVSLLRNGAKHNIPDK), 126–157 (NGRLPLHAATAEPDMRLLTVLLQQSNISEINH), 161–190 (EGMTPLHWAAFHNQPQHTQMLLKKGADPTL), 194–223 (DFKTALHWAVQSGNRILCSIILSHHQGPSI), 230–260 (SGKTCVHIAAAAGFSDIIHELARVPECNLQA), 264–293 (DDRTPLHWAAAAGKAECVQSLLELGMDSNL), and 297–326 (NESTPLAYALYCGHTACVKLLSQESRTEPT). 4 disordered regions span residues 319 to 339 (QESRTEPTRPPPSQSSRPQKK), 354 to 375 (KKEEQRAHQKDPSRDRYREEDT), 454 to 476 (TSHAGLSSAPHHMAQRSQKSRSE), and 564 to 614 (RNNL…SDEN). Over residues 354-373 (KKEEQRAHQKDPSRDRYREE) the composition is skewed to basic and acidic residues. Residue S475 is modified to Phosphoserine.

In Homo sapiens (Human), this protein is Ankyrin repeat domain-containing protein 55 (ANKRD55).